A 312-amino-acid polypeptide reads, in one-letter code: tRNA pseudouridine synthase B (312 aa).

The active-site Nucleophile is the Asp47.

This sequence belongs to the pseudouridine synthase TruB family. Type 1 subfamily.

It catalyses the reaction uridine(55) in tRNA = pseudouridine(55) in tRNA. In terms of biological role, responsible for synthesis of pseudouridine from uracil-55 in the psi GC loop of transfer RNAs. The chain is tRNA pseudouridine synthase B from Vibrio cholerae serotype O1 (strain M66-2).